The primary structure comprises 225 residues: MPNETNCTLDFEQSVQLFKEYNLFITAFLLFLTIILQYGYATRTKVIYTLKMIVLWCFWPLNIAVGVISCTYPPNTGGLVVAIILTVFACLSFVGYWIQSIRLFKRCRSWWSFNPESNAVGSILLTNGQQCNFAIESVPMVLSPIIKNGVLYCEGQWLAKCEPDHLPKDIFVCTPDRRNIYRMVQKYTGDQSGNKKRFATFVYAKQSVDTGELESVATGGSSLYT.

Residues 1 to 20 (MPNETNCTLDFEQSVQLFKE) are Virion surface-facing. A helical transmembrane segment spans residues 21–41 (YNLFITAFLLFLTIILQYGYA). Residues 42 to 51 (TRTKVIYTLK) lie on the Intravirion side of the membrane. A helical membrane pass occupies residues 52-72 (MIVLWCFWPLNIAVGVISCTY). The Virion surface segment spans residues 73 to 77 (PPNTG). The helical transmembrane segment at 78–98 (GLVVAIILTVFACLSFVGYWI) threads the bilayer. The Intravirion portion of the chain corresponds to 99 to 225 (QSIRLFKRCR…VATGGSSLYT (127 aa)).

This sequence belongs to the gammacoronaviruses M protein family. In terms of assembly, homomultimer. Interacts with envelope E protein in the budding compartment of the host cell, which is located between endoplasmic reticulum and the Golgi complex. Forms a complex with HE and S proteins. Interacts with nucleocapsid N protein. This interaction probably participates in RNA packaging into the virus.

It is found in the virion membrane. It localises to the host Golgi apparatus membrane. Component of the viral envelope that plays a central role in virus morphogenesis and assembly via its interactions with other viral proteins. The polypeptide is Membrane protein (Avian infectious bronchitis virus (strain Beaudette US) (IBV)).